Consider the following 148-residue polypeptide: Large ribosomal subunit protein bL9 (148 aa).

It belongs to the bacterial ribosomal protein bL9 family.

In terms of biological role, binds to the 23S rRNA. This chain is Large ribosomal subunit protein bL9, found in Bacillus cereus (strain B4264).